We begin with the raw amino-acid sequence, 102 residues long: Small ribosomal subunit protein uS10 (102 aa).

It belongs to the universal ribosomal protein uS10 family. Part of the 30S ribosomal subunit.

Its function is as follows. Involved in the binding of tRNA to the ribosomes. In Dehalococcoides mccartyi (strain ATCC BAA-2266 / KCTC 15142 / 195) (Dehalococcoides ethenogenes (strain 195)), this protein is Small ribosomal subunit protein uS10.